We begin with the raw amino-acid sequence, 513 residues long: ATP synthase subunit alpha (513 aa).

Gly169–Thr176 is an ATP binding site.

This sequence belongs to the ATPase alpha/beta chains family. F-type ATPases have 2 components, CF(1) - the catalytic core - and CF(0) - the membrane proton channel. CF(1) has five subunits: alpha(3), beta(3), gamma(1), delta(1), epsilon(1). CF(0) has three main subunits: a(1), b(2) and c(9-12). The alpha and beta chains form an alternating ring which encloses part of the gamma chain. CF(1) is attached to CF(0) by a central stalk formed by the gamma and epsilon chains, while a peripheral stalk is formed by the delta and b chains.

Its subcellular location is the cell inner membrane. It carries out the reaction ATP + H2O + 4 H(+)(in) = ADP + phosphate + 5 H(+)(out). Its function is as follows. Produces ATP from ADP in the presence of a proton gradient across the membrane. The alpha chain is a regulatory subunit. This Hydrogenovibrio crunogenus (strain DSM 25203 / XCL-2) (Thiomicrospira crunogena) protein is ATP synthase subunit alpha.